Consider the following 166-residue polypeptide: Ribonuclease H (166 aa).

The 143-residue stretch at 5–147 (PRKRVALFTD…VDREARRQAQ (143 aa)) folds into the RNase H type-1 domain. 4 residues coordinate Mg(2+): Asp14, Glu52, Asp74, and Asp139. A disordered region spans residues 128 to 166 (GHTGHPENERVDREARRQAQSQAKTPCPPQAPTLFHEEA). Basic and acidic residues predominate over residues 131–144 (GHPENERVDREARR).

It belongs to the RNase H family. As to quaternary structure, monomer. The cofactor is Mg(2+).

The protein resides in the cytoplasm. It catalyses the reaction Endonucleolytic cleavage to 5'-phosphomonoester.. In terms of biological role, endonuclease that specifically degrades the RNA of RNA-DNA hybrids. The polypeptide is Ribonuclease H (Thermus thermophilus (strain ATCC BAA-163 / DSM 7039 / HB27)).